The chain runs to 778 residues: Arf-GAP with coiled-coil, ANK repeat and PH domain-containing protein 2 (778 aa).

Positions methionine 1–arginine 226 constitute a BAR domain. Positions glycine 266 to alanine 361 constitute a PH domain. The segment at serine 371–serine 391 is disordered. A compositionally biased stretch (polar residues) spans serine 379–glycine 388. Residues serine 384 and serine 387 each carry the phosphoserine modification. The region spanning glutamate 399 to leucine 520 is the Arf-GAP domain. The C4-type zinc-finger motif lies at cysteine 414 to cysteine 437. Serine 521 bears the Phosphoserine mark. The tract at residues serine 540–leucine 599 is disordered. Over residues alanine 552–serine 569 the composition is skewed to polar residues. Phosphoserine is present on residues serine 581 and serine 584. 3 ANK repeats span residues asparagine 640–glutamine 669, glutamine 673–alanine 702, and glutamate 706–methionine 735. At tyrosine 742 the chain carries Phosphotyrosine. At serine 775 the chain carries Phosphoserine.

Interacts (via KANK domains) with RAB35 (GTP-bound form); the interaction is direct and probably recruits ACAP2 to membranes including plasma membrane. Interacts with MICALL1; the interaction is indirect through RAB35. As to expression, widely expressed. Highest level in lung.

It localises to the cell membrane. The protein resides in the endosome membrane. GAP activity stimulated by phosphatidylinositol 4,5-bisphosphate (PIP2) and phosphatidic acid. Functionally, GTPase-activating protein (GAP) for ADP ribosylation factor 6 (ARF6). Doesn't show GAP activity for RAB35. The chain is Arf-GAP with coiled-coil, ANK repeat and PH domain-containing protein 2 (ACAP2) from Homo sapiens (Human).